A 212-amino-acid chain; its full sequence is ATP-dependent Clp protease proteolytic subunit (212 aa).

Ser-107 (nucleophile) is an active-site residue. Residue His-132 is part of the active site.

This sequence belongs to the peptidase S14 family. As to quaternary structure, fourteen ClpP subunits assemble into 2 heptameric rings which stack back to back to give a disk-like structure with a central cavity, resembling the structure of eukaryotic proteasomes.

It is found in the cytoplasm. The enzyme catalyses Hydrolysis of proteins to small peptides in the presence of ATP and magnesium. alpha-casein is the usual test substrate. In the absence of ATP, only oligopeptides shorter than five residues are hydrolyzed (such as succinyl-Leu-Tyr-|-NHMec, and Leu-Tyr-Leu-|-Tyr-Trp, in which cleavage of the -Tyr-|-Leu- and -Tyr-|-Trp bonds also occurs).. Its function is as follows. Cleaves peptides in various proteins in a process that requires ATP hydrolysis. Has a chymotrypsin-like activity. Plays a major role in the degradation of misfolded proteins. The polypeptide is ATP-dependent Clp protease proteolytic subunit (Pseudoalteromonas atlantica (strain T6c / ATCC BAA-1087)).